The following is a 274-amino-acid chain: Penicillin-insensitive murein endopeptidase (274 aa).

The N-terminal stretch at M1–A19 is a signal peptide. 3 cysteine pairs are disulfide-bonded: C44–C265, C187–C235, and C216–C223. Residues H110, H113, D120, D147, H150, and H211 each coordinate Zn(2+). The segment at D225 to L274 is disordered.

This sequence belongs to the peptidase M74 family. Dimer. Requires Zn(2+) as cofactor.

The protein localises to the periplasm. Its function is as follows. Murein endopeptidase that cleaves the D-alanyl-meso-2,6-diamino-pimelyl amide bond that connects peptidoglycan strands. Likely plays a role in the removal of murein from the sacculus. The polypeptide is Penicillin-insensitive murein endopeptidase (Salmonella heidelberg (strain SL476)).